Reading from the N-terminus, the 336-residue chain is Small ribosomal subunit protein uS9m (336 aa).

Residues 32 to 81 (STTTTTTTTTTTTTSDEIPTTKPRFQSRFRRNQQPHQQQRSPYTSSQVTE) are disordered. Residues 33–45 (TTTTTTTTTTTTT) are compositionally biased toward low complexity. Polar residues predominate over residues 65 to 81 (QPHQQQRSPYTSSQVTE).

The protein belongs to the universal ribosomal protein uS9 family. Component of the mitochondrial small ribosomal subunit (mt-SSU).

It is found in the mitochondrion. Its function is as follows. Component of the mitochondrial ribosome (mitoribosome), a dedicated translation machinery responsible for the synthesis of mitochondrial genome-encoded proteins, including at least some of the essential transmembrane subunits of the mitochondrial respiratory chain. The mitoribosomes are attached to the mitochondrial inner membrane and translation products are cotranslationally integrated into the membrane. The sequence is that of Small ribosomal subunit protein uS9m (MRPS9) from Candida albicans (strain SC5314 / ATCC MYA-2876) (Yeast).